A 319-amino-acid polypeptide reads, in one-letter code: Acetyl-coenzyme A carboxylase carboxyl transferase subunit alpha (319 aa).

A CoA carboxyltransferase C-terminal domain is found at 35 to 296 (NIDEEVHRLR…KAQLLADLAD (262 aa)).

This sequence belongs to the AccA family. Acetyl-CoA carboxylase is a heterohexamer composed of biotin carboxyl carrier protein (AccB), biotin carboxylase (AccC) and two subunits each of ACCase subunit alpha (AccA) and ACCase subunit beta (AccD).

It localises to the cytoplasm. The enzyme catalyses N(6)-carboxybiotinyl-L-lysyl-[protein] + acetyl-CoA = N(6)-biotinyl-L-lysyl-[protein] + malonyl-CoA. It participates in lipid metabolism; malonyl-CoA biosynthesis; malonyl-CoA from acetyl-CoA: step 1/1. Its function is as follows. Component of the acetyl coenzyme A carboxylase (ACC) complex. First, biotin carboxylase catalyzes the carboxylation of biotin on its carrier protein (BCCP) and then the CO(2) group is transferred by the carboxyltransferase to acetyl-CoA to form malonyl-CoA. This chain is Acetyl-coenzyme A carboxylase carboxyl transferase subunit alpha, found in Klebsiella pneumoniae subsp. pneumoniae (strain ATCC 700721 / MGH 78578).